A 178-amino-acid chain; its full sequence is MTQMPAGDVPGMGRRQFMNLLTFGSVTGVALGALYPVVNYFIPPRAAGSGGGTSAKDELGNAVTASGWLSTHPAGDRSLVQGLKGDPTYLIVEGDDAIGSYGINAICTHLGCVVPWNSGANKFMCPCHGSQYDATGKVVRGPAPLSLALANVSVENDNVFVSQWTDTDFRTGEKPWWA.

The helical transmembrane segment at leucine 20 to isoleucine 42 threads the bilayer. Residues threonine 71–valine 161 form the Rieske domain. [2Fe-2S] cluster contacts are provided by cysteine 107, histidine 109, cysteine 125, and histidine 128. Cysteine 112 and cysteine 127 form a disulfide bridge.

It belongs to the Rieske iron-sulfur protein family. As to quaternary structure, the 4 large subunits of the cytochrome b6-f complex are cytochrome b6, subunit IV (17 kDa polypeptide, PetD), cytochrome f and the Rieske protein, while the 4 small subunits are PetG, PetL, PetM and PetN. The complex functions as a dimer. It depends on [2Fe-2S] cluster as a cofactor.

The protein resides in the cellular thylakoid membrane. It carries out the reaction 2 oxidized [plastocyanin] + a plastoquinol + 2 H(+)(in) = 2 reduced [plastocyanin] + a plastoquinone + 4 H(+)(out). In terms of biological role, component of the cytochrome b6-f complex, which mediates electron transfer between photosystem II (PSII) and photosystem I (PSI), cyclic electron flow around PSI, and state transitions. The chain is Cytochrome b6-f complex iron-sulfur subunit from Synechococcus sp. (strain WH7803).